The chain runs to 83 residues: uncharacterized protein (83 aa).

Belongs to the UPF0440 family.

This is an uncharacterized protein from Natronomonas pharaonis (strain ATCC 35678 / DSM 2160 / CIP 103997 / JCM 8858 / NBRC 14720 / NCIMB 2260 / Gabara) (Halobacterium pharaonis).